We begin with the raw amino-acid sequence, 306 residues long: Acyl transferase (306 aa).

Residues Ser117, Asp214, and His244 each act as charge relay system in the active site.

It belongs to the LuxD family.

Its pathway is lipid metabolism; fatty acid reduction for biolumincescence. Functionally, acyl transferase is part of the fatty acid reductase system required for aldehyde biosynthesis; it produces fatty acids for the luminescent reaction. In Photobacterium phosphoreum, this protein is Acyl transferase.